Reading from the N-terminus, the 275-residue chain is NH(3)-dependent NAD(+) synthetase (275 aa).

Position 46-53 (46-53 (GISGGQDS)) interacts with ATP. Asp52 lines the Mg(2+) pocket. Arg140 provides a ligand contact to deamido-NAD(+). Thr160 contributes to the ATP binding site. Glu165 contributes to the Mg(2+) binding site. Residues Lys173 and Asp180 each coordinate deamido-NAD(+). Residues Lys189 and Thr211 each coordinate ATP. 260–261 (HK) lines the deamido-NAD(+) pocket.

It belongs to the NAD synthetase family. In terms of assembly, homodimer.

The catalysed reaction is deamido-NAD(+) + NH4(+) + ATP = AMP + diphosphate + NAD(+) + H(+). The protein operates within cofactor biosynthesis; NAD(+) biosynthesis; NAD(+) from deamido-NAD(+) (ammonia route): step 1/1. Catalyzes the ATP-dependent amidation of deamido-NAD to form NAD. Uses ammonia as a nitrogen source. This is NH(3)-dependent NAD(+) synthetase from Escherichia fergusonii (strain ATCC 35469 / DSM 13698 / CCUG 18766 / IAM 14443 / JCM 21226 / LMG 7866 / NBRC 102419 / NCTC 12128 / CDC 0568-73).